The following is a 435-amino-acid chain: Casein kinase 1-like protein 12 (435 aa).

The region spanning 9 to 278 (YRLGRKIGSG…LKRIFRDLFI (270 aa)) is the Protein kinase domain. ATP is bound by residues 15-23 (IGSGSFGEI) and K38. Catalysis depends on D128, which acts as the Proton acceptor. 2 disordered regions span residues 313 to 363 (VGTS…RGPM) and 394 to 414 (LRNS…TRKH).

Belongs to the protein kinase superfamily. CK1 Ser/Thr protein kinase family. Casein kinase I subfamily. As to quaternary structure, monomer. Post-translationally, autophosphorylated.

It localises to the cytoplasm. The enzyme catalyses L-seryl-[protein] + ATP = O-phospho-L-seryl-[protein] + ADP + H(+). It carries out the reaction L-threonyl-[protein] + ATP = O-phospho-L-threonyl-[protein] + ADP + H(+). Functionally, casein kinases are operationally defined by their preferential utilization of acidic proteins such as caseins as substrates. It can phosphorylate a large number of proteins. This is Casein kinase 1-like protein 12 from Arabidopsis thaliana (Mouse-ear cress).